Here is a 292-residue protein sequence, read N- to C-terminus: Seed lectin (292 aa).

The first 37 residues, 1-37, serve as a signal peptide directing secretion; sequence MATSNSRPHLLQTHKPFSVVLAISITFFLLLLNKVNS. Residues Asn82 and Asn154 are each glycosylated (N-linked (GlcNAc...) asparagine). Residues Asp163 and Asp165 each contribute to the Mn(2+) site. Ca(2+)-binding residues include Asp165, His167, Asn169, and Asp172. Residues Asp172 and His177 each contribute to the Mn(2+) site. Asn186 carries an N-linked (GlcNAc...) asparagine glycan.

This sequence belongs to the leguminous lectin family.

Mannose/glucose-specific lectin. This chain is Seed lectin, found in Styphnolobium japonicum (Japanese pagoda tree).